The sequence spans 370 residues: Flagellar P-ring protein (370 aa).

Residues 1–24 (MTLSKWILSFGLSVCLIVSHPVSA) form the signal peptide.

It belongs to the FlgI family. In terms of assembly, the basal body constitutes a major portion of the flagellar organelle and consists of four rings (L,P,S, and M) mounted on a central rod.

The protein resides in the periplasm. It localises to the bacterial flagellum basal body. Its function is as follows. Assembles around the rod to form the L-ring and probably protects the motor/basal body from shearing forces during rotation. The sequence is that of Flagellar P-ring protein from Nitrosomonas europaea (strain ATCC 19718 / CIP 103999 / KCTC 2705 / NBRC 14298).